A 167-amino-acid chain; its full sequence is NAD(P)H-quinone oxidoreductase subunit I, chloroplastic (167 aa).

2 4Fe-4S ferredoxin-type domains span residues 55–84 (GRIHFEFDKCIACEVCVRVCPIDLPVVDWK) and 95–124 (LNYSIDFGICIFCGNCVEYCPTNCLSMTEE). 8 residues coordinate [4Fe-4S] cluster: C64, C67, C70, C74, C104, C107, C110, and C114.

It belongs to the complex I 23 kDa subunit family. NDH is composed of at least 16 different subunits, 5 of which are encoded in the nucleus. Requires [4Fe-4S] cluster as cofactor.

It is found in the plastid. Its subcellular location is the chloroplast thylakoid membrane. The catalysed reaction is a plastoquinone + NADH + (n+1) H(+)(in) = a plastoquinol + NAD(+) + n H(+)(out). It catalyses the reaction a plastoquinone + NADPH + (n+1) H(+)(in) = a plastoquinol + NADP(+) + n H(+)(out). NDH shuttles electrons from NAD(P)H:plastoquinone, via FMN and iron-sulfur (Fe-S) centers, to quinones in the photosynthetic chain and possibly in a chloroplast respiratory chain. The immediate electron acceptor for the enzyme in this species is believed to be plastoquinone. Couples the redox reaction to proton translocation, and thus conserves the redox energy in a proton gradient. This chain is NAD(P)H-quinone oxidoreductase subunit I, chloroplastic, found in Morus indica (Mulberry).